We begin with the raw amino-acid sequence, 238 residues long: Uridylate kinase (238 aa).

An ATP-binding site is contributed by 12 to 15 (KLSG). The tract at residues 20 to 25 (GQQGFG) is involved in allosteric activation by GTP. A UMP-binding site is contributed by Gly54. 2 residues coordinate ATP: Gly55 and Arg59. UMP contacts are provided by residues Asp74 and 135–142 (TGNPFFTT). ATP is bound by residues Thr162, Asn163, Tyr168, and Asp171.

This sequence belongs to the UMP kinase family. Homohexamer.

It is found in the cytoplasm. The catalysed reaction is UMP + ATP = UDP + ADP. It functions in the pathway pyrimidine metabolism; CTP biosynthesis via de novo pathway; UDP from UMP (UMPK route): step 1/1. Its activity is regulated as follows. Allosterically activated by GTP. Inhibited by UTP. Catalyzes the reversible phosphorylation of UMP to UDP. This is Uridylate kinase from Bradyrhizobium diazoefficiens (strain JCM 10833 / BCRC 13528 / IAM 13628 / NBRC 14792 / USDA 110).